The primary structure comprises 210 residues: Thymidylate kinase (210 aa).

Position 10 to 17 (10 to 17 (GPEGAGKS)) interacts with ATP.

The protein belongs to the thymidylate kinase family.

The enzyme catalyses dTMP + ATP = dTDP + ADP. In terms of biological role, phosphorylation of dTMP to form dTDP in both de novo and salvage pathways of dTTP synthesis. The protein is Thymidylate kinase of Pseudomonas entomophila (strain L48).